A 1758-amino-acid chain; its full sequence is RanBP2-like and GRIP domain-containing protein 3 (1758 aa).

Ser-21 is subject to Phosphoserine. The TPR 1 repeat unit spans residues 60 to 93; sequence PRAHRFLGLLYELEENTEKAVECYRRSVELNPTQ. The stretch at 176 to 229 forms a coiled coil; the sequence is RSTKRLKDAVARCHEAERNIALRSSLEWNSCVVQTLKEYLESLQCLESDKSDWR. The stretch at 584-617 is one TPR 2 repeat; the sequence is QKMGSGLNSFYDQREYIGRSVHYWKKVLPLLKII. Residues 761–805 form a disordered region; that stretch reads GPLYKNGSLRNADSEIKHSTPSPTKYSLSPSKSYKYSPKTPPRWA. Residues 779-798 are compositionally biased toward low complexity; it reads STPSPTKYSLSPSKSYKYSP. Residues 805 to 837 are a coiled coil; that stretch reads AEDQNSLLKMIRQEVKAIKEEMQELKLNSSKSA. Positions 1037–1173 constitute a RanBD1 1 domain; the sequence is HFEPVVQMPE…FEECQRLLLD (137 aa). Disordered regions lie at residues 1216–1248, 1307–1335, and 1581–1622; these read VAEEENKGSGTGAAGASDTTIKPNAENTGPTLE, AKLNQSGTSVGTDEESDVTQEEERDGQYF, and NNSE…KNLS. The span at 1236-1245 shows a compositional bias: polar residues; sequence IKPNAENTGP. Residues 1318 to 1330 are compositionally biased toward acidic residues; that stretch reads TDEESDVTQEEER. One can recognise a RanBD1 2 domain in the interval 1334–1470; the sequence is YFEPVVPLPD…FDEAKTAQEK (137 aa). The segment covering 1581–1594 has biased composition (polar residues); that stretch reads NNSETSSVAQSGSE. The span at 1595 to 1618 shows a compositional bias: basic and acidic residues; the sequence is SKVEPKKCELSKNSDIEQSSDSKV. The GRIP domain occupies 1703–1753; the sequence is QEVSAANVEHLKNVLLQFIFLKPGSERERLLPVINTMLQLSLEEKGKLAAV.

The chain is RanBP2-like and GRIP domain-containing protein 3 (RGPD3) from Homo sapiens (Human).